The following is a 170-amino-acid chain: Non-specific lipid transfer protein GPI-anchored 5 (170 aa).

Residues 1-24 form the signal peptide; sequence MKMEMGLVFLTVFMAVMSSTMVSA. Intrachain disulfides connect Cys28/Cys69, Cys38/Cys53, Cys54/Cys95, and Cys67/Cys105. Residues Asn45, Asn84, Asn124, and Asn130 are each glycosylated (N-linked (GlcNAc...) asparagine). A disordered region spans residues 105-148; it reads CNTGGGGGGSTSDSPAESPNSSGPGNGSKTVPVGEGDGPPSSDG. Ser146 carries GPI-anchor amidated serine lipidation. Residues 147-170 constitute a propeptide, removed in mature form; sequence DGSSIKFSFPLIAFFSAVSYMAIF.

The protein belongs to the plant LTP family. As to expression, expressed in seedlings, preferentially in the endodermis of hypocotyls and roots, as well as in anthers, sepals and flower tori.

The protein localises to the cell membrane. Its function is as follows. Lipid transfer protein involved in seed and ovule maturation and development, probably by regulating the fatty acids homeostasis during suberin and sporopollenin biosynthesis or deposition. Contributes to pre-invasive defense against some non-host powdery mildew pathogens by preventing the penetration of the epidermal cell wall by the fungal agents (e.g. Blumeria graminis f. sp. hordei (Bgh)). This is Non-specific lipid transfer protein GPI-anchored 5 from Arabidopsis thaliana (Mouse-ear cress).